Consider the following 85-residue polypeptide: Kappa-theraphotoxin-Gr1a (85 aa).

Residues 1–21 (MKTSVFAAILGLALFAVLCSG) form the signal peptide. The propeptide occupies 22-49 (SELQEKDLKETLLSAIMETALEAQPEER). Cystine bridges form between Cys-51-Cys-65, Cys-58-Cys-70, and Cys-64-Cys-77. Residues 53–55 (YLF) are involved in active face.

It belongs to the neurotoxin 10 (Hwtx-1) family. 09 (HaTx) subfamily. In terms of tissue distribution, expressed by the venom gland.

It is found in the secreted. Functionally, inhibits Kv2.1/KCNB1 and Kv4.2/KCND2 voltage-gated potassium channels. Acts as a gating modifier by shifting channel openings to more depolarized voltages and acts via the occupancy of multiple binding sites on the channel. The toxin binding sites are situated on the S3-S4 extracellular linker of the channel. At least two hanatoxin molecules can occupy the Kv2.1/KCNB1 channel, and maybe more (three or four). Can also inhibit calcium channels (Cav2.1/CACNA1A). Needs to partition into the membrane in order to bind to the channel. The sequence is that of Kappa-theraphotoxin-Gr1a from Grammostola rosea (Chilean rose tarantula).